Here is a 302-residue protein sequence, read N- to C-terminus: GrpE protein homolog 1, mitochondrial (302 aa).

Residues 1 to 39 (MLVSRVLSRVSRSAGLRSSFSSVVTPKRNQIPIVASRFH) constitute a mitochondrion transit peptide. The disordered stretch occupies residues 77–97 (SAEPKGNESNTEVPKTGETSE).

Belongs to the GrpE family. Probable component of the PAM complex, at least composed of SSC1 (mtHsp70), MGE1, TIM44, PAM16/TIM16, PAM17 and PAM18/TIM14. Interacts with SSQ1.

It is found in the mitochondrion matrix. Functionally, essential component of the PAM complex, a complex required for the translocation of transit peptide-containing proteins from the inner membrane into the mitochondrial matrix in an ATP-dependent manner. Seems to control the nucleotide-dependent binding of mitochondrial HSP70 to substrate proteins. Binds ATP. Interacts with copper ions Cu(2+). The polypeptide is GrpE protein homolog 1, mitochondrial (Arabidopsis thaliana (Mouse-ear cress)).